Consider the following 329-residue polypeptide: Flotillin-like protein FloA (329 aa).

Residues 4–24 form a helical membrane-spanning segment; sequence IWGFLILILVLIFLGVFFSFV.

This sequence belongs to the flotillin-like FloA family. Homooligomerizes.

It localises to the cell membrane. The protein localises to the membrane raft. Found in functional membrane microdomains (FMM) that may be equivalent to eukaryotic membrane rafts. FMMs are highly dynamic and increase in number as cells age. Flotillins are thought to be important factors in membrane fluidity. This chain is Flotillin-like protein FloA, found in Dictyoglomus turgidum (strain DSM 6724 / Z-1310).